A 205-amino-acid chain; its full sequence is Thymidine kinase (205 aa).

ATP contacts are provided by residues 9 to 16 and 87 to 90; these read SAMNAGKS and DESQ. The active-site Proton acceptor is the Glu88. Positions 145, 147, 182, and 185 each coordinate Zn(2+).

Belongs to the thymidine kinase family. Homotetramer.

The protein resides in the cytoplasm. The enzyme catalyses thymidine + ATP = dTMP + ADP + H(+). The chain is Thymidine kinase from Salmonella choleraesuis (strain SC-B67).